A 353-amino-acid polypeptide reads, in one-letter code: H(2)-forming methylenetetrahydromethanopterin dehydrogenase-related protein MJ1338 (353 aa).

The protein belongs to the HMD family.

The protein is H(2)-forming methylenetetrahydromethanopterin dehydrogenase-related protein MJ1338 of Methanocaldococcus jannaschii (strain ATCC 43067 / DSM 2661 / JAL-1 / JCM 10045 / NBRC 100440) (Methanococcus jannaschii).